A 100-amino-acid polypeptide reads, in one-letter code: NADH-quinone oxidoreductase subunit K (100 aa).

3 helical membrane passes run 2 to 22 (IPLS…VAGF), 28 to 48 (IIVM…NLVA), and 64 to 84 (FVIT…ICLF).

It belongs to the complex I subunit 4L family. As to quaternary structure, NDH-1 is composed of 14 different subunits. Subunits NuoA, H, J, K, L, M, N constitute the membrane sector of the complex.

Its subcellular location is the cell inner membrane. The catalysed reaction is a quinone + NADH + 5 H(+)(in) = a quinol + NAD(+) + 4 H(+)(out). Its function is as follows. NDH-1 shuttles electrons from NADH, via FMN and iron-sulfur (Fe-S) centers, to quinones in the respiratory chain. The immediate electron acceptor for the enzyme in this species is believed to be ubiquinone. Couples the redox reaction to proton translocation (for every two electrons transferred, four hydrogen ions are translocated across the cytoplasmic membrane), and thus conserves the redox energy in a proton gradient. The protein is NADH-quinone oxidoreductase subunit K of Desulfovibrio desulfuricans (strain ATCC 27774 / DSM 6949 / MB).